Reading from the N-terminus, the 233-residue chain is Large ribosomal subunit protein uL1 (233 aa).

Belongs to the universal ribosomal protein uL1 family. As to quaternary structure, part of the 50S ribosomal subunit.

Functionally, binds directly to 23S rRNA. The L1 stalk is quite mobile in the ribosome, and is involved in E site tRNA release. Its function is as follows. Protein L1 is also a translational repressor protein, it controls the translation of the L11 operon by binding to its mRNA. In Geotalea daltonii (strain DSM 22248 / JCM 15807 / FRC-32) (Geobacter daltonii), this protein is Large ribosomal subunit protein uL1.